Reading from the N-terminus, the 319-residue chain is MKPTVISADAMFEEFRGSLRWEWLAGLGASERQFDPEVISRAQSAADLVGYLNYIHPYRVQILGAREVAYLTRGSQEDCARRIARIVTLEPPMLVLADGQAAPDELLSICERAQLPLFATRESSAFVIDLLRAYLSKHFAERTSMHGVFMDILGMGVMITGESGLGKSELGLELISRGNGLVADDAVDLFRINQNTIEGRCPDLLLNLLEVRGIGLLDIRAIFGETAVRRKMRLKLIVHLVRRDSFERDYERMPSAPLTQDVLGIPVRKVIIQVVAGRNIAVLVEAAVRNSILQLRGIDTYADFVARHHKAMESGRDGD.

Catalysis depends on residues histidine 146 and lysine 167. 161–168 (GESGLGKS) is an ATP binding site. Serine 168 provides a ligand contact to Mg(2+). Aspartate 185 serves as the catalytic Proton acceptor; for phosphorylation activity. Proton donor; for dephosphorylation activity. The interval 209-218 (LEVRGIGLLD) is important for the catalytic mechanism of both phosphorylation and dephosphorylation. Residue glutamate 210 participates in Mg(2+) binding. Arginine 252 is a catalytic residue. An important for the catalytic mechanism of dephosphorylation region spans residues 273–278 (QVVAGR).

Belongs to the HPrK/P family. Homohexamer. The cofactor is Mg(2+).

It carries out the reaction [HPr protein]-L-serine + ATP = [HPr protein]-O-phospho-L-serine + ADP + H(+). The enzyme catalyses [HPr protein]-O-phospho-L-serine + phosphate + H(+) = [HPr protein]-L-serine + diphosphate. In terms of biological role, catalyzes the ATP- as well as the pyrophosphate-dependent phosphorylation of a specific serine residue in HPr, a phosphocarrier protein of the phosphoenolpyruvate-dependent sugar phosphotransferase system (PTS). HprK/P also catalyzes the pyrophosphate-producing, inorganic phosphate-dependent dephosphorylation (phosphorolysis) of seryl-phosphorylated HPr (P-Ser-HPr). This is HPr kinase/phosphorylase from Variovorax paradoxus (strain S110).